Reading from the N-terminus, the 162-residue chain is Shikimate kinase (162 aa).

Gly11–Ser16 contacts ATP. Residue Ser15 participates in Mg(2+) binding. Substrate-binding residues include Asp33, Arg57, and Gly80. The LID domain stretch occupies residues Asn109–Thr123. Arg116 serves as a coordination point for ATP. Residue Arg132 coordinates substrate.

Belongs to the shikimate kinase family. As to quaternary structure, monomer. The cofactor is Mg(2+).

It is found in the cytoplasm. It catalyses the reaction shikimate + ATP = 3-phosphoshikimate + ADP + H(+). The protein operates within metabolic intermediate biosynthesis; chorismate biosynthesis; chorismate from D-erythrose 4-phosphate and phosphoenolpyruvate: step 5/7. In terms of biological role, catalyzes the specific phosphorylation of the 3-hydroxyl group of shikimic acid using ATP as a cosubstrate. The protein is Shikimate kinase (aroK) of Helicobacter pylori (strain ATCC 700392 / 26695) (Campylobacter pylori).